A 295-amino-acid polypeptide reads, in one-letter code: Aquaporin-9 (295 aa).

Topologically, residues 1 to 24 (MPSEKDRAKKNLVQRLALKSCLAK) are cytoplasmic. Residues 25-43 (ETLSEFLGTFIMIVLGCGS) traverse the membrane as a helical segment. Topologically, residues 44–57 (IAQAVLSREKAGGI) are extracellular. A helical membrane pass occupies residues 58–77 (ITINIGFATAVVMALYATFG). Residues 78 to 79 (VS) are Cytoplasmic-facing. An intramembrane region (discontinuously helical) is located at residues 80-92 (GGHINPAVSFAMC). The NPA 1 motif lies at 84-86 (NPA). The Cytoplasmic segment spans residues 93–98 (TFGRME). Residues 99 to 123 (WFKFPFYVGAQLLGAFVGAATVFGI) traverse the membrane as a helical segment. Topologically, residues 124–160 (YYDGLMAFADGKLLITGENGTAFIFATYPKPFVSVPG) are extracellular. Residues 161 to 178 (AFVDQVVSTMFLLLIVFA) traverse the membrane as a helical segment. At 179 to 190 (IFDSRNLGVPRG) the chain is on the cytoplasmic side. A helical membrane pass occupies residues 191–207 (LEPIVIGLLIIVISCSL). Topologically, residues 208–210 (GLN) are extracellular. The discontinuously helical intramembrane region spans 211-225 (SGCAMNPARDLSPRL). Residues 216–218 (NPA) carry the NPA 2 motif. Residues 226–243 (FTALAGWGFEVFTFGNNF) are Extracellular-facing. Residues 244–264 (WWIPVVGPMIGAVLGGLIYVL) traverse the membrane as a helical segment. The Cytoplasmic portion of the chain corresponds to 265–295 (FIQMHHSNPDPEVKAEPAENNLEKHELSVIM).

This sequence belongs to the MIP/aquaporin (TC 1.A.8) family. Homotetramer; each monomer provides an independent glycerol/water pore.

It localises to the cell membrane. It is found in the basolateral cell membrane. It carries out the reaction glycerol(in) = glycerol(out). It catalyses the reaction H2O(in) = H2O(out). The catalysed reaction is urea(in) = urea(out). The enzyme catalyses (S)-lactate(in) = (S)-lactate(out). It carries out the reaction NH4(+)(in) = NH4(+)(out). It catalyses the reaction uracil(in) = uracil(out). The catalysed reaction is adenine(out) = adenine(in). The enzyme catalyses 3-hydroxybutanoate(in) = 3-hydroxybutanoate(out). It carries out the reaction D-sorbitol(in) = D-sorbitol(out). It catalyses the reaction D-mannitol(in) = D-mannitol(out). The catalysed reaction is H2O2(out) = H2O2(in). The enzyme catalyses arsenite(in) = arsenite(out). It carries out the reaction selenite(in) = selenite(out). Its function is as follows. Aquaglyceroporins form homotetrameric transmembrane channels, with each monomer independently mediating glycerol and water transport across the plasma membrane along their osmotic gradient. AQP9 is the primary route for glycerol uptake in hepatocytes, supporting hepatic gluconeogenesis. It exhibits broad specificity and may transport various small, non-charged solutes, including carbamides, polyols, purines, and pyrimidines. AQP9 may also facilitate hepatic urea extrusion. Due to its permeability to lactate, AQP9 might participate in the astrocyte-to-neuron lactate shuttle, supplying neurons with energy. Additionally, AQP9 is permeable to arsenite, contributing to arsenic excretion by the liver and providing partial protection against arsenic toxicity. It is also permeable to H2O2 in vivo. Could also be permeable to ammonium. The sequence is that of Aquaporin-9 from Mus musculus (Mouse).